We begin with the raw amino-acid sequence, 84 residues long: Small ribosomal subunit protein bS20 (84 aa).

It belongs to the bacterial ribosomal protein bS20 family.

Its function is as follows. Binds directly to 16S ribosomal RNA. This Limosilactobacillus reuteri (strain DSM 20016) (Lactobacillus reuteri) protein is Small ribosomal subunit protein bS20.